The following is a 906-amino-acid chain: Toll-like receptor 12 (906 aa).

A signal peptide spans 1–21 (MGRYWLLPGLLLSLPLVTGWS). Residues 22-709 (TSNCLVTEGS…DHCPQTLELK (688 aa)) are Extracellular-facing. Asparagine 59 carries an N-linked (GlcNAc...) asparagine glycan. LRR repeat units follow at residues 91–114 (FPGL…LRGL), 115–140 (GQLQ…AFSD), 142–170 (ISLQ…QWLG), 198–222 (SWTL…SLQG), 224–247 (QVEI…GLQK), 267–290 (HFEL…ALAS), 291–314 (CHSL…FLTA), 316–338 (PRLQ…MNET), 341–364 (VSGL…AFSC), 366–388 (PHLR…LFQE), 389–412 (LQQL…WLAA), 414–436 (PALT…GFWG), 462–484 (LTSL…PAIF), 485–508 (PSLE…NASG), and 510–533 (FPAL…GTSN). Asparagine 336 is a glycosylation site (N-linked (GlcNAc...) asparagine). The N-linked (GlcNAc...) asparagine glycan is linked to asparagine 505. An N-linked (GlcNAc...) asparagine glycan is attached at asparagine 552. LRR repeat units lie at residues 562-586 (LPSL…QLEE) and 591-614 (LPQL…AFQR). Residues 710–730 (LFLASSALVFMLIALPLLQEA) form a helical membrane-spanning segment. At 731–906 (RNSWIPYLQA…FWTWLRSRLG (176 aa)) the chain is on the cytoplasmic side. In terms of domain architecture, TIR spans 759–905 (FLFDVFVSHC…GFWTWLRSRL (147 aa)).

It belongs to the Toll-like receptor family. In terms of assembly, binds MYD88 via their respective TIR domains. In terms of tissue distribution, macrophages, liver, kidney and bladder epithelial cells.

Its subcellular location is the membrane. Participates in the innate immune response to microbial agents. Acts via MYD88 and TRAF6, leading to NF-kappa-B activation, cytokine secretion and the inflammatory response. Plays a role in preventing infection of internal organs of the urogenital system. The sequence is that of Toll-like receptor 12 from Mus musculus (Mouse).